The sequence spans 396 residues: MAEKEHYERTKPHVNIGTIGHVDHGKTTLTAAITKVLSEKGLAKAQDYASIDAAPEEKERGITINTAHVEYETEKRHYAHIDAPGHADYVKNMITGAAQMDGAILVVAATDGPMPQTREHILLARQVGVDYIVVFLNKTDLVDDPELIDLVEMEVRELLSEYDYPGDDIPVIRGSALKALEGDPEQEKVIMELMDTIDEYIPTPVRETDKPFLMPVEDVFTITGRGTVASGRIDRGTVKIGDEVEIIGLKPDVIKSTVTGLEMFRKTLDLGEAGDNVGVLLRGVNREQVERGQVLAKPGSIQLHNKFKGEVYILTKEEGGRHTPFFSNYRPQFYFHTTDVTGVIELPDGVEMVMPGDNVTFEVDLIAPVAIEKGTKFTVREGGRTVGAGVVSEILD.

One can recognise a tr-type G domain in the interval 11–205 (KPHVNIGTIG…TIDEYIPTPV (195 aa)). The segment at 20–27 (GHVDHGKT) is G1. 20–27 (GHVDHGKT) contacts GTP. Thr-27 lines the Mg(2+) pocket. The tract at residues 61–65 (GITIN) is G2. The interval 82–85 (DAPG) is G3. Residues 82-86 (DAPGH) and 137-140 (NKTD) contribute to the GTP site. Residues 137–140 (NKTD) form a G4 region. The G5 stretch occupies residues 175–177 (SAL).

The protein belongs to the TRAFAC class translation factor GTPase superfamily. Classic translation factor GTPase family. EF-Tu/EF-1A subfamily. In terms of assembly, monomer.

It is found in the cytoplasm. It catalyses the reaction GTP + H2O = GDP + phosphate + H(+). GTP hydrolase that promotes the GTP-dependent binding of aminoacyl-tRNA to the A-site of ribosomes during protein biosynthesis. The polypeptide is Elongation factor Tu (Lacticaseibacillus casei (strain BL23) (Lactobacillus casei)).